The sequence spans 574 residues: Glycine--tRNA ligase (574 aa).

Substrate-binding residues include R96 and E162. Residues 194–196 (RNE), 204–209 (IRLREF), 327–328 (EC), and 450–453 (GIDR) each bind ATP. Substrate is bound at residue 209-213 (FTQAE). 446–450 (EPSYG) provides a ligand contact to substrate.

The protein belongs to the class-II aminoacyl-tRNA synthetase family.

It is found in the cytoplasm. It carries out the reaction tRNA(Gly) + glycine + ATP = glycyl-tRNA(Gly) + AMP + diphosphate. Catalyzes the attachment of glycine to tRNA(Gly). This chain is Glycine--tRNA ligase, found in Methanococcus maripaludis (strain C7 / ATCC BAA-1331).